The sequence spans 115 residues: Large ribosomal subunit protein bL20 (115 aa).

Belongs to the bacterial ribosomal protein bL20 family.

Its function is as follows. Binds directly to 23S ribosomal RNA and is necessary for the in vitro assembly process of the 50S ribosomal subunit. It is not involved in the protein synthesizing functions of that subunit. This is Large ribosomal subunit protein bL20 from Prochlorococcus marinus (strain NATL2A).